Consider the following 117-residue polypeptide: Hainantoxin-XV (117 aa).

The N-terminal stretch at 1 to 20 is a signal peptide; the sequence is MKLCAVIIASLLVCVAVASS. The segment at 20-55 is disordered; it reads SSDNQKEFAQEKEMTREETQSLGEHEKDDEVTGSEE. Residues 21–56 constitute a propeptide that is removed on maturation; it reads SDNQKEFAQEKEMTREETQSLGEHEKDDEVTGSEER. Residues 23-55 show a composition bias toward basic and acidic residues; the sequence is NQKEFAQEKEMTREETQSLGEHEKDDEVTGSEE. Disulfide bonds link Cys-58/Cys-72, Cys-65/Cys-78, Cys-69/Cys-115, and Cys-71/Cys-91.

This sequence belongs to the neurotoxin 03 (Tx2) family. 02 subfamily. HNTX-XV sub-subfamily. In terms of tissue distribution, expressed by the venom gland.

Its subcellular location is the secreted. Its function is as follows. Putative ion channel inhibitor. In Cyriopagopus hainanus (Chinese bird spider), this protein is Hainantoxin-XV.